A 352-amino-acid chain; its full sequence is Protein RecA (352 aa).

65-72 (GPESSGKT) contacts ATP.

Belongs to the RecA family.

It is found in the cytoplasm. Functionally, can catalyze the hydrolysis of ATP in the presence of single-stranded DNA, the ATP-dependent uptake of single-stranded DNA by duplex DNA, and the ATP-dependent hybridization of homologous single-stranded DNAs. It interacts with LexA causing its activation and leading to its autocatalytic cleavage. The protein is Protein RecA of Pseudomonas fluorescens (strain Pf0-1).